Here is a 318-residue protein sequence, read N- to C-terminus: Carbamate kinase (318 aa).

The protein belongs to the carbamate kinase family.

It localises to the cytoplasm. It catalyses the reaction hydrogencarbonate + NH4(+) + ATP = carbamoyl phosphate + ADP + H2O + H(+). It participates in metabolic intermediate metabolism; carbamoyl phosphate degradation; CO(2) and NH(3) from carbamoyl phosphate: step 1/1. This chain is Carbamate kinase (arcC), found in Lentilactobacillus hilgardii (Lactobacillus hilgardii).